Reading from the N-terminus, the 83-residue chain is Cytochrome b559 subunit alpha (83 aa).

Residues 21–35 (VIHSITIPSLFIAGW) form a helical membrane-spanning segment. Residue histidine 23 participates in heme binding.

The protein belongs to the PsbE/PsbF family. As to quaternary structure, heterodimer of an alpha subunit and a beta subunit. PSII is composed of 1 copy each of membrane proteins PsbA, PsbB, PsbC, PsbD, PsbE, PsbF, PsbH, PsbI, PsbJ, PsbK, PsbL, PsbM, PsbT, PsbX, PsbY, PsbZ, Psb30/Ycf12, at least 3 peripheral proteins of the oxygen-evolving complex and a large number of cofactors. It forms dimeric complexes. Requires heme b as cofactor.

The protein localises to the plastid. Its subcellular location is the chloroplast thylakoid membrane. Functionally, this b-type cytochrome is tightly associated with the reaction center of photosystem II (PSII). PSII is a light-driven water:plastoquinone oxidoreductase that uses light energy to abstract electrons from H(2)O, generating O(2) and a proton gradient subsequently used for ATP formation. It consists of a core antenna complex that captures photons, and an electron transfer chain that converts photonic excitation into a charge separation. The polypeptide is Cytochrome b559 subunit alpha (Pinus koraiensis (Korean pine)).